Here is a 170-residue protein sequence, read N- to C-terminus: MSLPDPAELIRQMATDLNAHLSKRGISDPRFIGIRTGGVWVAQALLKALNNPAPLGTLDVSFYRDDFSQNGLHPQVRPSELPFEIEGQHLVLIDDVLMSGRTVRAALNELFDYGRPASVTLVCLLDLDAGELPVRPNVVGATLSLAPDERIKLSGPEPLALELQDLSTAL.

The PRPP-binding signature appears at 90-102; the sequence is LVLIDDVLMSGRT.

This sequence belongs to the purine/pyrimidine phosphoribosyltransferase family. PyrR subfamily.

The enzyme catalyses UMP + diphosphate = 5-phospho-alpha-D-ribose 1-diphosphate + uracil. Its function is as follows. Regulates the transcription of the pyrimidine nucleotide (pyr) operon in response to exogenous pyrimidines. Also displays a weak uracil phosphoribosyltransferase activity which is not physiologically significant. This is Bifunctional protein PyrR from Pseudomonas syringae pv. syringae (strain B728a).